Here is an 876-residue protein sequence, read N- to C-terminus: Valine--tRNA ligase (876 aa).

A 'HIGH' region motif is present at residues 44 to 54 (PNVTGKLHLGH). The short motif at 520–524 (KMSKS) is the 'KMSKS' region element. Residue K523 coordinates ATP. Residues 805–876 (LEGLIDMDKE…VKARIEQLKA (72 aa)) are a coiled coil.

This sequence belongs to the class-I aminoacyl-tRNA synthetase family. ValS type 1 subfamily. As to quaternary structure, monomer.

The protein localises to the cytoplasm. The enzyme catalyses tRNA(Val) + L-valine + ATP = L-valyl-tRNA(Val) + AMP + diphosphate. Its function is as follows. Catalyzes the attachment of valine to tRNA(Val). As ValRS can inadvertently accommodate and process structurally similar amino acids such as threonine, to avoid such errors, it has a 'posttransfer' editing activity that hydrolyzes mischarged Thr-tRNA(Val) in a tRNA-dependent manner. In Staphylococcus carnosus (strain TM300), this protein is Valine--tRNA ligase.